The following is a 399-amino-acid chain: S-adenosylmethionine synthase (399 aa).

His16 is an ATP binding site. Asp18 is a binding site for Mg(2+). Glu44 provides a ligand contact to K(+). Glu57 and Gln100 together coordinate L-methionine. The tract at residues 100–110 is flexible loop; it reads QSSDIAQGVNE. ATP-binding positions include 177 to 179, 244 to 245, Asp253, 259 to 260, Ala276, and Lys280; these read DAK, RF, and RK. Asp253 contacts L-methionine. Lys284 provides a ligand contact to L-methionine.

Belongs to the AdoMet synthase family. As to quaternary structure, homotetramer; dimer of dimers. It depends on Mg(2+) as a cofactor. The cofactor is K(+).

The protein resides in the cytoplasm. It catalyses the reaction L-methionine + ATP + H2O = S-adenosyl-L-methionine + phosphate + diphosphate. It participates in amino-acid biosynthesis; S-adenosyl-L-methionine biosynthesis; S-adenosyl-L-methionine from L-methionine: step 1/1. Functionally, catalyzes the formation of S-adenosylmethionine (AdoMet) from methionine and ATP. The overall synthetic reaction is composed of two sequential steps, AdoMet formation and the subsequent tripolyphosphate hydrolysis which occurs prior to release of AdoMet from the enzyme. In Lactococcus lactis subsp. lactis (strain IL1403) (Streptococcus lactis), this protein is S-adenosylmethionine synthase.